The primary structure comprises 578 residues: Proteasome-associated ATPase (578 aa).

A coiled-coil region spans residues 8 to 84; that stretch reads TAAELRNQVR…LKEEVDRLAQ (77 aa). 267–272 contributes to the ATP binding site; the sequence is GCGKTL. Residues 577–578 are docks into pockets in the proteasome alpha-ring; that stretch reads YL.

It belongs to the AAA ATPase family. In terms of assembly, homohexamer. Assembles into a hexameric ring structure that caps the 20S proteasome core. Strongly interacts with the prokaryotic ubiquitin-like protein Pup through a hydrophobic interface; the interacting region of ARC lies in its N-terminal coiled-coil domain. There is one Pup binding site per ARC hexamer ring. Upon ATP-binding, the C-terminus of ARC interacts with the alpha-rings of the proteasome core, possibly by binding to the intersubunit pockets.

It functions in the pathway protein degradation; proteasomal Pup-dependent pathway. ATPase which is responsible for recognizing, binding, unfolding and translocation of pupylated proteins into the bacterial 20S proteasome core particle. May be essential for opening the gate of the 20S proteasome via an interaction with its C-terminus, thereby allowing substrate entry and access to the site of proteolysis. Thus, the C-termini of the proteasomal ATPase may function like a 'key in a lock' to induce gate opening and therefore regulate proteolysis. The chain is Proteasome-associated ATPase from Kribbella flavida (strain DSM 17836 / JCM 10339 / NBRC 14399).